A 429-amino-acid chain; its full sequence is Putative protease Do-like 14 (429 aa).

The interval 87 to 113 (KSEAPINDEKGVSVEASDSSSKPSNGY) is disordered. The segment at 113–338 (YLGRDTIANA…IRPWIGLKMV (226 aa)) is serine protease. Active-site charge relay system residues include H165, D203, and S281. One can recognise a PDZ domain in the interval 318 to 424 (IIEHFKKSGR…RVTLEVIPEE (107 aa)).

Belongs to the peptidase S1C family.

Its function is as follows. Putative serine protease. The protein is Putative protease Do-like 14 (DEGP14) of Arabidopsis thaliana (Mouse-ear cress).